The following is a 175-amino-acid chain: 3-hydroxyanthranilate 3,4-dioxygenase (175 aa).

Residue Arg-45 coordinates O2. His-49, Glu-55, and His-93 together coordinate Fe cation. Residue Glu-55 coordinates substrate. Arg-97 and Glu-107 together coordinate substrate. A divalent metal cation is bound by residues Cys-122, Cys-125, Cys-159, and Cys-162.

The protein belongs to the 3-HAO family. Fe(2+) serves as cofactor.

It localises to the cytoplasm. It catalyses the reaction 3-hydroxyanthranilate + O2 = (2Z,4Z)-2-amino-3-carboxymuconate 6-semialdehyde. Its pathway is cofactor biosynthesis; NAD(+) biosynthesis; quinolinate from L-kynurenine: step 3/3. Functionally, catalyzes the oxidative ring opening of 3-hydroxyanthranilate to 2-amino-3-carboxymuconate semialdehyde, which spontaneously cyclizes to quinolinate. In Lodderomyces elongisporus (strain ATCC 11503 / CBS 2605 / JCM 1781 / NBRC 1676 / NRRL YB-4239) (Yeast), this protein is 3-hydroxyanthranilate 3,4-dioxygenase.